The following is a 108-amino-acid chain: uncharacterized protein (108 aa).

2 stretches are compositionally biased toward basic and acidic residues: residues Met1 to Val15 and Lys53 to Glu69. Positions Met1–Lys77 are disordered.

This is an uncharacterized protein from Homo sapiens (Human).